Consider the following 271-residue polypeptide: Thiazole synthase (271 aa).

The active-site Schiff-base intermediate with DXP is Lys95. Residues Gly156, 182 to 183 (AG), and 204 to 205 (NT) each bind 1-deoxy-D-xylulose 5-phosphate.

Belongs to the ThiG family. As to quaternary structure, homotetramer. Forms heterodimers with either ThiH or ThiS.

The protein localises to the cytoplasm. It carries out the reaction [ThiS sulfur-carrier protein]-C-terminal-Gly-aminoethanethioate + 2-iminoacetate + 1-deoxy-D-xylulose 5-phosphate = [ThiS sulfur-carrier protein]-C-terminal Gly-Gly + 2-[(2R,5Z)-2-carboxy-4-methylthiazol-5(2H)-ylidene]ethyl phosphate + 2 H2O + H(+). Its pathway is cofactor biosynthesis; thiamine diphosphate biosynthesis. Its function is as follows. Catalyzes the rearrangement of 1-deoxy-D-xylulose 5-phosphate (DXP) to produce the thiazole phosphate moiety of thiamine. Sulfur is provided by the thiocarboxylate moiety of the carrier protein ThiS. In vitro, sulfur can be provided by H(2)S. In Yersinia pseudotuberculosis serotype O:3 (strain YPIII), this protein is Thiazole synthase.